A 195-amino-acid chain; its full sequence is MRTAQVSRSTAETEISVSVNLDGSGTYDNQTGVGFFDHMLDQLSRHSLIDMTIRAKGDYHIDDHHTVEDTGIALGQALVQALGDKKGINRYGECHLPMDDAQVRAALDLSARPFLVWNVDLPTQKIGSFDTELVREFFQALATHGGITLHIDQIHGVNSHHIAEAAFKAVARALRTAVEVDPRKADAVPSTKGAL.

This sequence belongs to the imidazoleglycerol-phosphate dehydratase family.

The protein localises to the cytoplasm. It catalyses the reaction D-erythro-1-(imidazol-4-yl)glycerol 3-phosphate = 3-(imidazol-4-yl)-2-oxopropyl phosphate + H2O. Its pathway is amino-acid biosynthesis; L-histidine biosynthesis; L-histidine from 5-phospho-alpha-D-ribose 1-diphosphate: step 6/9. The sequence is that of Imidazoleglycerol-phosphate dehydratase from Ruegeria sp. (strain TM1040) (Silicibacter sp.).